Reading from the N-terminus, the 207-residue chain is Arginine exporter protein ArgO (207 aa).

Transmembrane regions (helical) follow at residues 1–21, 42–62, 67–87, 111–131, 150–170, and 185–205; these read MLST…PLGP, LCAI…SALL, LLLQ…GWGA, VVAI…DTIV, FGAA…AAWF, and GFIC…GLLI.

This sequence belongs to the LysE/ArgO transporter (TC 2.A.75) family.

The protein localises to the cell inner membrane. It catalyses the reaction L-arginine(in) = L-arginine(out). In terms of biological role, involved in the export of arginine. Important to control the intracellular level of arginine and the correct balance between arginine and lysine. The chain is Arginine exporter protein ArgO from Photorhabdus laumondii subsp. laumondii (strain DSM 15139 / CIP 105565 / TT01) (Photorhabdus luminescens subsp. laumondii).